The following is a 123-amino-acid chain: Large ribosomal subunit protein uL29 (123 aa).

Belongs to the universal ribosomal protein uL29 family.

This Caenorhabditis elegans protein is Large ribosomal subunit protein uL29 (rpl-35).